The following is a 410-amino-acid chain: Acetyltransferase aurG (410 aa).

3 helical membrane-spanning segments follow: residues 3–23 (LWLV…VVCF), 28–48 (SLVR…GLIL), and 59–79 (WSLV…VGLI). Polar residues predominate over residues 90 to 99 (TSSRGGQPNA). The tract at residues 90–112 (TSSRGGQPNASLDLAGRKKPPSS) is disordered. N-linked (GlcNAc...) asparagine glycosylation occurs at N98. 4 helical membrane-spanning segments follow: residues 157-177 (AMTL…GGDL), 219-239 (MYFS…MVGL), 300-320 (ILAT…YSYG), and 364-384 (IGYV…FFPL).

It belongs to the wax synthase family.

The protein localises to the membrane. It functions in the pathway polyketide biosynthesis. Functionally, acetyltransferase; part of the gene cluster that mediates the biosynthesis of aurovertins, fungal polyketides that exhibit potent inhibition of adenosine triphosphate synthase. Tha biosynthesis starts with the HR-PKS aurA that selects propionate as the starter unit; synthesizes a hexa-ene chain through the repeated functions of the KR and DH domains in the first six iterations; selectively introduces three alpha-methyl substitutions at C4, C6, and C16 using the S-adensylmethionine-dependent cMET; and shuts off KR and DH in the last three iterations to afford a 1,3,5-triketo portion that can undergo intramolecular cyclization to yield the alpha-pyrone intermediate. AurE may act as a cyclase and enhances the rate of pyrone formation and product release of aurA. The methyltransferase aurB then methylates the C17 hydroxyl group. C17 methylation is required to initiate epoxidation by the downstream monooxygenase aurC. The monooxygenase aurC and the epoxide hydrolase aurD can iteratively transform the terminal triene portion of the methylated precursor into the dioxabicyclo[3.2.1]octane scaffold of aurovertin E. Epoxidation modifications of the precursor occur in two separate steps; bis-epoxidation of the two terminal olefins takes place first, followed by another epoxidation that occurs at C7-C8 after tetrahydrofuran formation. The O-acyltransferase aurG converts aurovertin E to aurovertin A. The protein is Acetyltransferase aurG of Calcarisporium arbuscula (Dendryphion arbuscula).